Consider the following 181-residue polypeptide: Transcription termination/antitermination protein NusG (181 aa).

The 32-residue stretch at 130–161 (PGEMVRVNDGPFADFNGVVEEVDYEKSRLKVS) folds into the KOW domain.

It belongs to the NusG family. As to quaternary structure, monomer. Interacts with the transcription termination factor Rho and with RNA polymerase.

Functionally, participates in transcription elongation, termination and antitermination. In the absence of Rho, increases the rate of transcription elongation by the RNA polymerase (RNAP), probably by partially suppressing pausing. In the presence of Rho, modulates most Rho-dependent termination events by interacting with the RNAP to render the complex more susceptible to the termination activity of Rho. May be required to overcome a kinetic limitation of Rho to function at certain terminators. Also involved in ribosomal RNA transcriptional antitermination. In Shigella flexneri, this protein is Transcription termination/antitermination protein NusG.